A 493-amino-acid polypeptide reads, in one-letter code: Poly(ribitol-phosphate) alpha-N-acetylglucosaminyltransferase (493 aa).

UDP-N-acetyl-alpha-D-glucosamine is bound by residues G17, K59, H249, R326, K331, T383, and 403-411; that span reads EGQGLSMIE.

Belongs to the glycosyltransferase group 1 family. Homotrimer.

It localises to the cytoplasm. The enzyme catalyses 4-O-[(D-ribitylphospho)(n)-di{(2R)-glycerylphospho}]-N-acetyl-beta-D-mannosaminyl-(1-&gt;4)-N-acetyl-alpha-D-glucosaminyl di-trans,octa-cis-undecaprenyl diphosphate + n UDP-N-acetyl-alpha-D-glucosamine = 4-O-([2-N-acetyl-alpha-D-glucosaminyl-1-D-ribitylphospho](n)-di{[2R]-1-glycerylphospho})-N-acetyl-beta-D-mannosaminyl-(1-&gt;4)-N-acetyl-alpha-D-glucosaminyl di-trans,octa-cis-undecaprenyl diphosphate + n UDP + n H(+). The protein operates within cell wall biogenesis; poly(ribitol phosphate) teichoic acid biosynthesis. Its function is as follows. Attaches N-acetyl-alpha-D-glucosamine residues to poly(RboP)-wall teichoic acids (WTAs). This Staphylococcus aureus (strain COL) protein is Poly(ribitol-phosphate) alpha-N-acetylglucosaminyltransferase.